The following is a 274-amino-acid chain: Undecaprenyl-diphosphatase 1 (274 aa).

Transmembrane regions (helical) follow at residues 7 to 27 (LEIF…WLPV), 48 to 68 (FIST…LVIF), 88 to 108 (VRLW…GILF), 115 to 135 (LFFN…IMIG), 151 to 171 (VTYK…IPGT), 189 to 209 (YVAA…ASAL), 221 to 241 (FEWL…IVVI), and 253 to 273 (FKVF…YFFL).

Belongs to the UppP family.

Its subcellular location is the cell membrane. It catalyses the reaction di-trans,octa-cis-undecaprenyl diphosphate + H2O = di-trans,octa-cis-undecaprenyl phosphate + phosphate + H(+). Functionally, catalyzes the dephosphorylation of undecaprenyl diphosphate (UPP). Confers resistance to bacitracin. This chain is Undecaprenyl-diphosphatase 1, found in Clostridioides difficile (strain 630) (Peptoclostridium difficile).